Here is a 282-residue protein sequence, read N- to C-terminus: Globin-related protein glb-13 (282 aa).

The tract at residues 1 to 46 (MGQENSKCPHQSLAEKRYKVERPKTKKVSSGSATERCLSTQSDEKN) is disordered. A compositionally biased stretch (basic and acidic residues) spans 13–23 (LAEKRYKVERP). Residues 28 to 41 (VSSGSATERCLSTQ) show a composition bias toward polar residues. The Globin domain maps to 100–249 (FLTRRERILL…IISFMRRGFD (150 aa)). Residues His162 and His194 each coordinate heme b.

The protein belongs to the globin family.

Involved in oxidative stress resistance. This chain is Globin-related protein glb-13, found in Caenorhabditis elegans.